Reading from the N-terminus, the 307-residue chain is Dihydroorotate dehydrogenase B (NAD(+)), catalytic subunit (307 aa).

FMN is bound by residues Ser-22 and 46 to 47 (KT). Substrate-binding positions include Lys-46, 70-74 (NAVGL), and Asn-128. Position 128 (Asn-128) interacts with FMN. Cys-131 acts as the Nucleophile in catalysis. The FMN site is built by Lys-166 and Ile-192. A substrate-binding site is contributed by 193 to 194 (NT). Residues Gly-218, 244-245 (GG), and 266-267 (GT) contribute to the FMN site.

This sequence belongs to the dihydroorotate dehydrogenase family. Type 1 subfamily. Heterotetramer of 2 PyrK and 2 PyrD type B subunits. FMN is required as a cofactor.

It is found in the cytoplasm. It carries out the reaction (S)-dihydroorotate + NAD(+) = orotate + NADH + H(+). It functions in the pathway pyrimidine metabolism; UMP biosynthesis via de novo pathway; orotate from (S)-dihydroorotate (NAD(+) route): step 1/1. Functionally, catalyzes the conversion of dihydroorotate to orotate with NAD(+) as electron acceptor. This Desulforudis audaxviator (strain MP104C) protein is Dihydroorotate dehydrogenase B (NAD(+)), catalytic subunit (pyrD).